We begin with the raw amino-acid sequence, 355 residues long: MNIKILKILVGGLFFLSLNAHLWGKQDNSFLGIGERAYKSGNYSKAASYFKKACNDGVSEGCTQLGIIYENGQGTRIDYKKALEYYKTACQADDREGCFGLGGLYDEGLGTAQNYQEAIDAYAKACVLKHPESCYNLGIIYDRKIKGNAAQAVTYYQKSCNFDMAKGCYILGTAYEKGFLEVKQSNHKAVIYYLKACRLNEGQACRALGSLFENGDAGLDEDFEVAFDYLQKACALNNSGGCASLGSMYMLGRYVKKDPQKAFNYFKQACDMGSAVSCSRMGFMYSQGDTVSKDLRKALDNYERGCDMGDEVGCFALAGMYYNMKDKENAIMIYDKGCKLGMKQACENLTKLRGY.

Residues 1–22 (MNIKILKILVGGLFFLSLNAHL) form the signal peptide. 8 TPR repeats span residues 27–60 (DNSFLGIGERAYKSGNYSKAASYFKKACNDGVSE), 63–96 (TQLGIIYENGQGTRIDYKKALEYYKTACQADDRE), 98–131 (CFGLGGLYDEGLGTAQNYQEAIDAYAKACVLKHP), 132–166 (ESCYNLGIIYDRKIKGNAAQAVTYYQKSCNFDMAK), 202–240 (GQACRALGSLFENGDAGLDEDFEVAFDYLQKACALNNSG), 245–275 (LGSMYMLGRYVKKDPQKAFNYFKQACDMGSA), 276–311 (VSCSRMGFMYSQGDTVSKDLRKALDNYERGCDMGDE), and 312–344 (VGCFALAGMYYNMKDKENAIMIYDKGCKLGMKQ). Cystine bridges form between cysteine 54/cysteine 62, cysteine 90/cysteine 98, cysteine 126/cysteine 134, cysteine 160/cysteine 168, cysteine 197/cysteine 205, cysteine 234/cysteine 242, cysteine 270/cysteine 278, cysteine 306/cysteine 314, and cysteine 338/cysteine 346.

This sequence belongs to the hcp beta-lactamase family.

It localises to the secreted. It catalyses the reaction a beta-lactam + H2O = a substituted beta-amino acid. Its function is as follows. May hydrolyze 6-aminopenicillinic acid and 7-aminocephalosporanic acid (ACA) derivatives. This Helicobacter pylori (strain J99 / ATCC 700824) (Campylobacter pylori J99) protein is Putative beta-lactamase HcpE (hcpE).